The following is a 446-amino-acid chain: WEB family protein At3g56270 (446 aa).

A coiled-coil region spans residues 313 to 349 (TNVSRIEILRKLEEANEEVKQSKQALEVALNRVEIAS).

This sequence belongs to the WEB family.

The sequence is that of WEB family protein At3g56270 from Arabidopsis thaliana (Mouse-ear cress).